The primary structure comprises 274 residues: 2,3,4,5-tetrahydropyridine-2,6-dicarboxylate N-succinyltransferase (274 aa).

2 residues coordinate substrate: R104 and D141.

Belongs to the transferase hexapeptide repeat family. Homotrimer.

Its subcellular location is the cytoplasm. It carries out the reaction (S)-2,3,4,5-tetrahydrodipicolinate + succinyl-CoA + H2O = (S)-2-succinylamino-6-oxoheptanedioate + CoA. Its pathway is amino-acid biosynthesis; L-lysine biosynthesis via DAP pathway; LL-2,6-diaminopimelate from (S)-tetrahydrodipicolinate (succinylase route): step 1/3. This Serratia proteamaculans (strain 568) protein is 2,3,4,5-tetrahydropyridine-2,6-dicarboxylate N-succinyltransferase.